The primary structure comprises 356 residues: Cytochrome c oxidase subunit 2 (356 aa).

The signal sequence occupies residues 1-20 (MVKHWRLILLLALVPLLLSG). A lipid anchor (N-palmitoyl cysteine) is attached at Cys21. Cys21 carries the S-diacylglycerol cysteine lipid modification. Topologically, residues 21–47 (CGKPFLSTLKPAGEVADKQYDLTVLST) are extracellular. Positions 21 to 257 (CGKPFLSTLK…KNYKSTAESD (237 aa)) are cytochrome c oxidase subunit II. The helical transmembrane segment at 48-66 (LIMVVVVAVVSVIFFYVIV) threads the bilayer. Residues 67 to 87 (RFRRSRVGENTIPKQVEGNKF) lie on the Cytoplasmic side of the membrane. A helical membrane pass occupies residues 88 to 106 (LEITWTVIPILLLIILVIP). At 107–356 (VVLYTLELAD…YLKGLKAESK (250 aa)) the chain is on the extracellular side. Cu cation contacts are provided by His176, Cys217, Cys221, and His225. The region spanning 258-356 (LAKQGEELFK…YLKGLKAESK (99 aa)) is the Cytochrome c domain. Heme c-binding residues include Cys271, Cys274, His275, and Met329.

This sequence belongs to the cytochrome c oxidase subunit 2 family. It depends on Cu cation as a cofactor. Requires heme c as cofactor.

The protein resides in the cell membrane. The enzyme catalyses 4 Fe(II)-[cytochrome c] + O2 + 8 H(+)(in) = 4 Fe(III)-[cytochrome c] + 2 H2O + 4 H(+)(out). Its function is as follows. Subunits I and II form the functional core of the enzyme complex. Electrons originating in cytochrome c are transferred via heme a and Cu(A) to the binuclear center formed by heme a3 and Cu(B). The polypeptide is Cytochrome c oxidase subunit 2 (ctaC) (Bacillus subtilis (strain 168)).